Consider the following 380-residue polypeptide: Palmitoyltransferase ZDHHC20 (380 aa).

Over 1 to 14 (MAPWTLWRCCQRVV) the chain is Cytoplasmic. Residues 15–35 (GWVPVLFITFVVVWSYYAYVV) form a helical membrane-spanning segment. The Lumenal portion of the chain corresponds to 36–53 (ELCVSTISRTGEKGKTVV). Residues 54–74 (YLVAFHLFFVMFVWSYWMTIF) form a helical membrane-spanning segment. Over 75–169 (TSPASPSKEF…NNCVGFTNYK (95 aa)) the chain is Cytoplasmic. The DHHC domain occupies 126-176 (RYCEKCQLIKPDRAHHCSACDRCVLKMDHHCPWVNNCVGFTNYKFFMLFLL). Zn(2+) is bound by residues C128 and C131. Substrate-binding positions include K135 and 140–143 (HHCS). H141, C142, C145, C148, and H155 together coordinate Zn(2+). Catalysis depends on C156, which acts as the S-palmitoyl cysteine intermediate. Position 162 (C162) interacts with Zn(2+). Residues 170–190 (FFMLFLLYSLLYCLFVAATVL) traverse the membrane as a helical segment. Residues 191 to 222 (EYFIKFWTLCRRKSTENCPKNEPTVLNFPSAK) lie on the Lumenal side of the membrane. A helical transmembrane segment spans residues 223–246 (FHVLFLFFVSAMFFVSVLSLFSYH). Topologically, residues 247 to 380 (CWLVGKNRTT…NNHVTVEIEN (134 aa)) are cytoplasmic. A phosphoserine mark is found at S320, S345, and S354.

It belongs to the DHHC palmitoyltransferase family. Autopalmitoylated (in vitro). As to expression, highest levels in lung.

It is found in the golgi apparatus membrane. Its subcellular location is the cell membrane. It localises to the cytoplasm. The protein localises to the perinuclear region. The protein resides in the endoplasmic reticulum membrane. It is found in the endoplasmic reticulum-Golgi intermediate compartment membrane. The enzyme catalyses L-cysteinyl-[protein] + hexadecanoyl-CoA = S-hexadecanoyl-L-cysteinyl-[protein] + CoA. The catalysed reaction is L-cysteinyl-[protein] + tetradecanoyl-CoA = S-tetradecanoyl-L-cysteinyl-[protein] + CoA. It catalyses the reaction L-cysteinyl-[protein] + octadecanoyl-CoA = S-octadecanoyl-L-cysteinyl-[protein] + CoA. Functionally, palmitoyltransferase that could catalyze the addition of palmitate onto various protein substrates. Catalyzes palmitoylation of Cys residues in the cytoplasmic C-terminus of EGFR, and modulates the duration of EGFR signaling by modulating palmitoylation-dependent EGFR internalization and degradation. Has a preference for acyl-CoA with C16 fatty acid chains. Can also utilize acyl-CoA with C14 and C18 fatty acid chains. May palmitoylate CALHM1 subunit of gustatory voltage-gated ion channels and modulate channel gating and kinetics. The protein is Palmitoyltransferase ZDHHC20 of Mus musculus (Mouse).